The primary structure comprises 78 residues: uncharacterized protein (78 aa).

Residues 20–78 (LQDLFPPHFGNEEADEDDEDGDKYGDDDGEFYGDNDGDNDGDNDGVNDGVGDGPPSTLL) form a disordered region. Over residues 31–64 (EEADEDDEDGDKYGDDDGEFYGDNDGDNDGDNDG) the composition is skewed to acidic residues.

This is an uncharacterized protein from Dictyostelium discoideum (Social amoeba).